A 70-amino-acid polypeptide reads, in one-letter code: DNA gyrase inhibitor YacG (70 aa).

Zn(2+) is bound by residues Cys-20, Cys-23, Cys-35, and Cys-39.

The protein belongs to the DNA gyrase inhibitor YacG family. As to quaternary structure, interacts with GyrB. It depends on Zn(2+) as a cofactor.

Inhibits all the catalytic activities of DNA gyrase by preventing its interaction with DNA. Acts by binding directly to the C-terminal domain of GyrB, which probably disrupts DNA binding by the gyrase. The chain is DNA gyrase inhibitor YacG from Rhizobium etli (strain ATCC 51251 / DSM 11541 / JCM 21823 / NBRC 15573 / CFN 42).